The primary structure comprises 624 residues: DNA-directed RNA polymerase III subunit rpc-3 (624 aa).

2 disordered regions span residues 229–260 and 373–418; these read KRKLAQNGGASKRRKLAVGNETNGAPEEEEDL and LAPK…ARMS. Over residues 385 to 403 the composition is skewed to acidic residues; sequence DDSDDDEEDGDYSDSDEEM. The interval 551–572 is leucine-zipper; that stretch reads CYATMVHCLQVLEVRRQKDKDV.

Belongs to the RNA polymerase beta chain family. In terms of assembly, component of the RNA polymerase III (Pol III) complex consisting of 17 subunits.

It localises to the nucleus. Functionally, DNA-dependent RNA polymerase catalyzes the transcription of DNA into RNA using the four ribonucleoside triphosphates as substrates. Specific core component of RNA polymerase III which synthesizes small RNAs, such as 5S rRNA and tRNAs. The polypeptide is DNA-directed RNA polymerase III subunit rpc-3 (rpc-82) (Neurospora crassa (strain ATCC 24698 / 74-OR23-1A / CBS 708.71 / DSM 1257 / FGSC 987)).